The chain runs to 399 residues: Elongation factor Tu (399 aa).

Positions 10–209 constitute a tr-type G domain; it reads KPHVNIGTIG…KVDEYIPTPV (200 aa). A G1 region spans residues 19 to 26; it reads GHVDHGKT. 19–26 contacts GTP; the sequence is GHVDHGKT. Thr26 contacts Mg(2+). A G2 region spans residues 60 to 64; it reads GITIA. Residues 81–84 are G3; the sequence is DCPG. GTP is bound by residues 81–85 and 136–139; these read DCPGH and NKAD. The G4 stretch occupies residues 136–139; the sequence is NKAD. A G5 region spans residues 174–176; it reads SAL.

The protein belongs to the TRAFAC class translation factor GTPase superfamily. Classic translation factor GTPase family. EF-Tu/EF-1A subfamily. In terms of assembly, monomer.

The protein resides in the cytoplasm. It catalyses the reaction GTP + H2O = GDP + phosphate + H(+). In terms of biological role, GTP hydrolase that promotes the GTP-dependent binding of aminoacyl-tRNA to the A-site of ribosomes during protein biosynthesis. This is Elongation factor Tu from Campylobacter curvus (strain 525.92).